The chain runs to 309 residues: Protein FdhE homolog (309 aa).

This sequence belongs to the FdhE family.

The protein localises to the cytoplasm. Necessary for formate dehydrogenase activity. The sequence is that of Protein FdhE homolog from Klebsiella pneumoniae (strain 342).